Reading from the N-terminus, the 528-residue chain is GMP synthase [glutamine-hydrolyzing] (528 aa).

The Glutamine amidotransferase type-1 domain maps to 13–204 (AIVILDFGSQ…VYDICSCEPD (192 aa)). The Nucleophile role is filled by cysteine 90. Residues histidine 178 and glutamate 180 contribute to the active site. Positions 205–403 (WTTNLFIDEA…LGLPDEIVRR (199 aa)) constitute a GMPS ATP-PPase domain. 232–238 (SGGVDSS) lines the ATP pocket.

As to quaternary structure, homodimer.

It carries out the reaction XMP + L-glutamine + ATP + H2O = GMP + L-glutamate + AMP + diphosphate + 2 H(+). Its pathway is purine metabolism; GMP biosynthesis; GMP from XMP (L-Gln route): step 1/1. Catalyzes the synthesis of GMP from XMP. The sequence is that of GMP synthase [glutamine-hydrolyzing] from Prochlorococcus marinus (strain NATL2A).